Here is a 338-residue protein sequence, read N- to C-terminus: D-erythrose-4-phosphate dehydrogenase (338 aa).

An NAD(+)-binding site is contributed by 11–12 (RI). Substrate contacts are provided by residues 153 to 155 (SCT), R199, 212 to 213 (TK), and R235. C154 functions as the Nucleophile in the catalytic mechanism. N317 provides a ligand contact to NAD(+).

It belongs to the glyceraldehyde-3-phosphate dehydrogenase family. Epd subfamily. As to quaternary structure, homotetramer.

It localises to the cytoplasm. The enzyme catalyses D-erythrose 4-phosphate + NAD(+) + H2O = 4-phospho-D-erythronate + NADH + 2 H(+). Its pathway is cofactor biosynthesis; pyridoxine 5'-phosphate biosynthesis; pyridoxine 5'-phosphate from D-erythrose 4-phosphate: step 1/5. Its function is as follows. Catalyzes the NAD-dependent conversion of D-erythrose 4-phosphate to 4-phosphoerythronate. The polypeptide is D-erythrose-4-phosphate dehydrogenase (Shewanella baltica (strain OS223)).